Here is a 199-residue protein sequence, read N- to C-terminus: Molybdenum cofactor guanylyltransferase (199 aa).

GTP-binding positions include 12 to 14 (LAG), Lys-25, Asn-53, Asp-71, and Asp-101. Asp-101 contributes to the Mg(2+) binding site.

It belongs to the MobA family. Monomer. It depends on Mg(2+) as a cofactor.

Its subcellular location is the cytoplasm. The enzyme catalyses Mo-molybdopterin + GTP + H(+) = Mo-molybdopterin guanine dinucleotide + diphosphate. In terms of biological role, transfers a GMP moiety from GTP to Mo-molybdopterin (Mo-MPT) cofactor (Moco or molybdenum cofactor) to form Mo-molybdopterin guanine dinucleotide (Mo-MGD) cofactor. In Cupriavidus necator (strain ATCC 17699 / DSM 428 / KCTC 22496 / NCIMB 10442 / H16 / Stanier 337) (Ralstonia eutropha), this protein is Molybdenum cofactor guanylyltransferase.